The following is a 349-amino-acid chain: Phenylalanine--tRNA ligase alpha subunit (349 aa).

Glutamate 261 lines the Mg(2+) pocket.

It belongs to the class-II aminoacyl-tRNA synthetase family. Phe-tRNA synthetase alpha subunit type 1 subfamily. In terms of assembly, tetramer of two alpha and two beta subunits. The cofactor is Mg(2+).

It is found in the cytoplasm. It carries out the reaction tRNA(Phe) + L-phenylalanine + ATP = L-phenylalanyl-tRNA(Phe) + AMP + diphosphate + H(+). The chain is Phenylalanine--tRNA ligase alpha subunit from Leuconostoc citreum (strain KM20).